The sequence spans 358 residues: Chorismate synthase (358 aa).

Arg-46 contacts NADP(+). FMN-binding positions include Arg-123–Ser-125, Asn-235–Ala-236, Gly-275, Lys-290–Ser-294, and Arg-316.

Belongs to the chorismate synthase family. As to quaternary structure, homotetramer. It depends on FMNH2 as a cofactor.

It carries out the reaction 5-O-(1-carboxyvinyl)-3-phosphoshikimate = chorismate + phosphate. It participates in metabolic intermediate biosynthesis; chorismate biosynthesis; chorismate from D-erythrose 4-phosphate and phosphoenolpyruvate: step 7/7. Its function is as follows. Catalyzes the anti-1,4-elimination of the C-3 phosphate and the C-6 proR hydrogen from 5-enolpyruvylshikimate-3-phosphate (EPSP) to yield chorismate, which is the branch point compound that serves as the starting substrate for the three terminal pathways of aromatic amino acid biosynthesis. This reaction introduces a second double bond into the aromatic ring system. In Sulfurimonas denitrificans (strain ATCC 33889 / DSM 1251) (Thiomicrospira denitrificans (strain ATCC 33889 / DSM 1251)), this protein is Chorismate synthase.